A 324-amino-acid chain; its full sequence is Glyoxylate/hydroxypyruvate reductase B (324 aa).

Active-site residues include Arg-237 and Glu-266. Residue His-285 is the Proton donor of the active site.

Belongs to the D-isomer specific 2-hydroxyacid dehydrogenase family. GhrB subfamily. As to quaternary structure, homodimer.

The protein localises to the cytoplasm. The enzyme catalyses glycolate + NADP(+) = glyoxylate + NADPH + H(+). It catalyses the reaction (R)-glycerate + NAD(+) = 3-hydroxypyruvate + NADH + H(+). It carries out the reaction (R)-glycerate + NADP(+) = 3-hydroxypyruvate + NADPH + H(+). In terms of biological role, catalyzes the NADPH-dependent reduction of glyoxylate and hydroxypyruvate into glycolate and glycerate, respectively. This Salmonella choleraesuis (strain SC-B67) protein is Glyoxylate/hydroxypyruvate reductase B.